We begin with the raw amino-acid sequence, 165 residues long: AP-3 complex subunit sigma (165 aa).

The protein belongs to the adaptor complexes small subunit family. As to quaternary structure, adaptor protein complex 3 (AP-3) is a heterotetramer composed of 2 large adaptins (apl5 and apl6), a medium adaptin (apm3) and a small adaptin (aps3).

Its subcellular location is the golgi apparatus. It is found in the cytoplasmic vesicle membrane. Functionally, part of the AP-3 complex, an adaptor-related complex which is not clathrin-associated. The complex is associated with the Golgi region as well as more peripheral structures. It facilitates the budding of vesicles from the Golgi membrane and may be directly involved in trafficking to the vacuole. This chain is AP-3 complex subunit sigma (aps3), found in Schizosaccharomyces pombe (strain 972 / ATCC 24843) (Fission yeast).